We begin with the raw amino-acid sequence, 361 residues long: Mitochondrial import receptor subunit TOM40 homolog (361 aa).

Residues 1–73 (MGNVLAASSP…GAAAASEDGS (73 aa)) form a disordered region. Over residues 11 to 36 (PAGPPPPPTPSLVGLPPPPPSPPGFT) the composition is skewed to pro residues. Gly residues predominate over residues 40 to 50 (LGGGLGTGSST). Positions 51-69 (GRGSERTPGAAASGAAAAS) are enriched in low complexity.

The protein belongs to the Tom40 family. As to quaternary structure, forms part of the preprotein translocase complex of the outer mitochondrial membrane (TOM complex) which consists of at least 7 different proteins (TOMM5, TOMM6, TOMM7, TOMM20, TOMM22, TOMM40 and TOMM70). Interacts with mitochondrial targeting sequences. Interacts with TIMM29; linking the TIM22 complex to the TOM complex. Forms a complex with BCAP31 (via C-terminus) which mediates the translocation of components of the mitochondrial membrane respiratory chain NADH dehydrogenase (Complex I) from the cytosol to the mitochondria. Interacts (via N-terminus) with CYP1A1 (via mitochondrial targeting signal); this interaction is required for CYP1A1 translocation across the mitochondrial outer membrane.

The protein resides in the mitochondrion outer membrane. Its function is as follows. Channel-forming protein essential for import of protein precursors into mitochondria. Plays a role in the assembly of the mitochondrial membrane respiratory chain NADH dehydrogenase (Complex I) by forming a complex with BCAP31 and mediating the translocation of Complex I components from the cytosol to the mitochondria. In Mus musculus (Mouse), this protein is Mitochondrial import receptor subunit TOM40 homolog (Tomm40).